The chain runs to 40 residues: Cytolysin SmT-1 (40 aa).

Positions 3–12 (ALAGTIIAGA) are plays an important role in the hemolytic activity. An N-terminal region region spans residues 11-30 (GASLGFQILDKVLGELGKVS).

The protein belongs to the actinoporin family. Sea anemone subfamily. In terms of assembly, octamer or nonamer in membranes. Monomer in the soluble state.

Its subcellular location is the secreted. It localises to the nematocyst. The protein localises to the target cell membrane. In terms of biological role, pore-forming protein that forms cations-selective hydrophilic pores of around 1 nm and causes cardiac stimulation and cytolysis. Pore formation is a multi-step process that involves specific recognition of membrane sphingomyelin (but neither cholesterol nor phosphatidylcholine) using aromatic rich region and adjacent phosphocholine (POC) binding site, firm binding to the membrane (mainly driven by hydrophobic interactions) accompanied by the transfer of the N-terminal region to the lipid-water interface and finally pore formation after oligomerization of monomers. This toxin shows hemolytic activities. In Stichodactyla mertensii (Merten's carpet sea anemone), this protein is Cytolysin SmT-1.